A 50-amino-acid chain; its full sequence is MQTLSSAPDPAASIAVTILAILLALTGFGLWSAFGPKAKKLTDPWDDHDD.

Residues 14 to 34 (IAVTILAILLALTGFGLWSAF) traverse the membrane as a helical segment.

This sequence belongs to the PsbN family.

It is found in the cellular thylakoid membrane. May play a role in photosystem I and II biogenesis. This chain is Protein PsbN, found in Prochlorococcus marinus (strain MIT 9215).